We begin with the raw amino-acid sequence, 121 residues long: Large ribosomal subunit protein uL14c (121 aa).

This sequence belongs to the universal ribosomal protein uL14 family. As to quaternary structure, part of the 50S ribosomal subunit.

It is found in the plastid. The protein localises to the chloroplast. Functionally, binds to 23S rRNA. This is Large ribosomal subunit protein uL14c from Euglena gracilis.